A 445-amino-acid chain; its full sequence is Xylose isomerase (445 aa).

Residues H107 and D110 contribute to the active site. Mg(2+)-binding residues include E238, E274, H277, D302, D313, D315, and D345.

Belongs to the xylose isomerase family. Homotetramer. Mg(2+) is required as a cofactor.

It is found in the cytoplasm. The catalysed reaction is alpha-D-xylose = alpha-D-xylulofuranose. This chain is Xylose isomerase, found in Bacillus velezensis (strain DSM 23117 / BGSC 10A6 / LMG 26770 / FZB42) (Bacillus amyloliquefaciens subsp. plantarum).